The chain runs to 389 residues: Trans-2-enoyl-CoA reductase [NADH] (389 aa).

Residues 47–52, 73–74, 110–111, and 138–139 contribute to the NAD(+) site; these read GASTGY, FE, DA, and LA. Position 224 (tyrosine 224) interacts with substrate. The Proton donor role is filled by tyrosine 234. NAD(+) is bound by residues lysine 243 and 272 to 274; that span reads LVT.

It belongs to the TER reductase family. In terms of assembly, monomer.

It carries out the reaction a 2,3-saturated acyl-CoA + NAD(+) = a (2E)-enoyl-CoA + NADH + H(+). It functions in the pathway lipid metabolism; fatty acid biosynthesis. Functionally, involved in the fatty acid synthesis (FAS II). Catalyzes the reduction of a carbon-carbon double bond in an enoyl moiety that is covalently linked to a coenzyme A (CoA). This is Trans-2-enoyl-CoA reductase [NADH] from Clostridium perfringens (strain ATCC 13124 / DSM 756 / JCM 1290 / NCIMB 6125 / NCTC 8237 / Type A).